Consider the following 232-residue polypeptide: Putative dimethylsulfoniopropionate lyase DddL (232 aa).

A divalent metal cation-binding residues include His-154, Glu-159, Tyr-161, and His-190.

It belongs to the non-heme iron-dependent dioxygenase family. As to quaternary structure, homodimer. A divalent metal cation serves as cofactor.

The enzyme catalyses S,S-dimethyl-beta-propiothetin = acrylate + dimethyl sulfide + H(+). Its function is as follows. May cleave dimethylsulfoniopropionate (DMSP), releasing dimethyl sulfide (DMS). DMS is the principal form by which sulfur is transported from oceans to the atmosphere. The real activity of the protein is however subject to debate and it is unclear whether it constitutes a real dimethylsulfoniopropionate lyase in vivo. This is Putative dimethylsulfoniopropionate lyase DddL (dddL) from Cereibacter sphaeroides (strain ATCC 17023 / DSM 158 / JCM 6121 / CCUG 31486 / LMG 2827 / NBRC 12203 / NCIMB 8253 / ATH 2.4.1.) (Rhodobacter sphaeroides).